The chain runs to 476 residues: Proton-coupled amino acid transporter 1 (476 aa).

Basic and acidic residues predominate over residues 1-15 (MSTQRLRNEDYHDYS). Residues 1 to 32 (MSTQRLRNEDYHDYSSTDVSPEESPSEGLNNL) form a disordered region. The Cytoplasmic portion of the chain corresponds to 1–51 (MSTQRLRNEDYHDYSSTDVSPEESPSEGLNNLSSPGSYQRFGQSNSTTWFQ). Residues 52 to 72 (TLIHLLKGNIGTGLLGLPLAV) form a helical membrane-spanning segment. The Extracellular segment spans residues 73–78 (KNAGIV). A helical membrane pass occupies residues 79–99 (MGPISLLIIGIVAVHCMGILV). Topologically, residues 100-141 (KCAHHFCRRLNKSFVDYGDTVMYGLESSPCSWLRNHAHWGRR) are cytoplasmic. Residues 142 to 162 (VVDFFLIVTQLGFCCVYFVFL) form a helical membrane-spanning segment. Residues 163–190 (ADNFKQVIEAANGTTNNCHNNETVILTP) are Extracellular-facing. N-linked (GlcNAc...) asparagine glycans are attached at residues Asn-174 and Asn-183. Residues Cys-180 and Cys-329 are joined by a disulfide bond. A helical transmembrane segment spans residues 191 to 211 (TMDSRLYMLSFLPFLVLLVFI). Residues 212-215 (RNLR) are Cytoplasmic-facing. Residues 216-236 (ALSIFSLLANITMLVSLVMIY) form a helical membrane-spanning segment. Over 237 to 257 (QFIVQRIPDPSHLPLVAPWKT) the chain is Extracellular. Residues 258 to 278 (YPLFFGTAIFSFEGIGMVLPL) traverse the membrane as a helical segment. Topologically, residues 279–289 (ENKMKDPRKFP) are cytoplasmic. The chain crosses the membrane as a helical span at residues 290 to 310 (LILYLGMVIVTILYISLGCLG). At 311-342 (YLQFGANIQGSITLNLPNCWLYQSVKLLYSIG) the chain is on the extracellular side. A helical membrane pass occupies residues 343–363 (IFFTYALQFYVPAEIIIPFFV). Residues 364-372 (SRAPEHCEL) are Cytoplasmic-facing. A helical transmembrane segment spans residues 373 to 393 (VVDLFVRTVLVCLTCILAILI). Topologically, residues 394 to 397 (PRLD) are extracellular. Residues 398–418 (LVISLVGSVSSSALALIIPPL) form a helical membrane-spanning segment. Residues 419–439 (LEVTTFYSEGMSPLTIFKDAL) lie on the Cytoplasmic side of the membrane. A helical transmembrane segment spans residues 440 to 460 (ISILGFVGFVVGTYEALYELI). The Extracellular portion of the chain corresponds to 461–476 (QPSNAPIFINSTCAFI). The N-linked (GlcNAc...) asparagine glycan is linked to Asn-470.

It belongs to the amino acid/polyamine transporter 2 family.

The protein localises to the cell membrane. The protein resides in the apical cell membrane. It localises to the lysosome membrane. The enzyme catalyses glycine(in) + H(+)(in) = glycine(out) + H(+)(out). It catalyses the reaction L-alanine(in) + H(+)(in) = L-alanine(out) + H(+)(out). The catalysed reaction is D-alanine(in) + H(+)(in) = D-alanine(out) + H(+)(out). It carries out the reaction L-proline(out) + H(+)(out) = L-proline(in) + H(+)(in). The enzyme catalyses D-proline(out) + H(+)(out) = D-proline(in) + H(+)(in). It catalyses the reaction D-serine(out) + H(+)(out) = D-serine(in) + H(+)(in). The catalysed reaction is L-serine(in) + H(+)(in) = L-serine(out) + H(+)(out). It carries out the reaction 4-aminobutanoate(in) + H(+)(in) = 4-aminobutanoate(out) + H(+)(out). The enzyme catalyses beta-alanine(in) + H(+)(in) = beta-alanine(out) + H(+)(out). Electrogenic proton/amino acid symporter with selectivity for small apolar L-amino acids, their D-enantiomers and selected amino acid derivatives such as 4-aminobutanoate/GABA. May be involved in the efflux from the lysosomal compartment of neutral amino acids resulting from proteolysis. May play a role in specifying sites for exocytosis in neurons. The sequence is that of Proton-coupled amino acid transporter 1 from Homo sapiens (Human).